Reading from the N-terminus, the 104-residue chain is UPF0145 protein NP_2600A (104 aa).

It belongs to the UPF0145 family.

In Natronomonas pharaonis (strain ATCC 35678 / DSM 2160 / CIP 103997 / JCM 8858 / NBRC 14720 / NCIMB 2260 / Gabara) (Halobacterium pharaonis), this protein is UPF0145 protein NP_2600A.